The sequence spans 695 residues: Serotransferrin (695 aa).

The N-terminal stretch at 1 to 19 (MRLAAGALLACAALGLCLA) is a signal peptide. Transferrin-like domains are found at residues 25–347 (VRWC…NLRE) and 361–680 (VKWC…NLRK). Cystine bridges form between Cys-28–Cys-67 and Cys-38–Cys-58. Dimethylated arginine is present on Arg-42. Fe(3+) is bound by residues Asp-82 and Tyr-114. 17 disulfide bridges follow: Cys-137-Cys-213, Cys-156-Cys-350, Cys-177-Cys-193, Cys-180-Cys-196, Cys-190-Cys-198, Cys-246-Cys-260, Cys-358-Cys-612, Cys-364-Cys-396, Cys-374-Cys-387, Cys-421-Cys-690, Cys-436-Cys-653, Cys-468-Cys-539, Cys-492-Cys-681, Cys-502-Cys-516, Cys-513-Cys-522, Cys-579-Cys-593, and Cys-631-Cys-636. Residues Thr-139, Arg-143, Ala-145, and Gly-146 each contribute to the hydrogencarbonate site. Tyr-207 contacts Fe(3+). Fe(3+) is bound at residue His-268. A Phosphoserine modification is found at Ser-389. Fe(3+)-binding residues include Asp-411 and Tyr-444. Positions 470, 474, 476, and 477 each coordinate hydrogencarbonate. Asn-509 carries an N-linked (GlcNAc...) asparagine glycan. A Fe(3+)-binding site is contributed by Tyr-533. Position 601 (His-601) interacts with Fe(3+). The residue at position 682 (Ser-682) is a Phosphoserine.

The protein belongs to the transferrin family. Monomer. Part of a complex composed of SLC40A1/ferroportin, TF/transferrin and HEPH/hephaestin that transfers iron from cells to transferrin. As to expression, expressed by the liver and secreted in plasma.

It is found in the secreted. Functionally, transferrins are iron binding transport proteins which can bind two Fe(3+) ions in association with the binding of an anion, usually bicarbonate. It is responsible for the transport of iron from sites of absorption and heme degradation to those of storage and utilization. Serum transferrin may also have a further role in stimulating cell proliferation. The sequence is that of Serotransferrin (TF) from Oryctolagus cuniculus (Rabbit).